We begin with the raw amino-acid sequence, 123 residues long: Putative outer membrane protein CPn_0818/CP_1053/CPj0818/CpB0847 (123 aa).

The signal sequence occupies residues 1–30; it reads MKRQKRKQSITLIEMMVVITLIGIIGGALA.

The protein resides in the cell outer membrane. This chain is Putative outer membrane protein CPn_0818/CP_1053/CPj0818/CpB0847, found in Chlamydia pneumoniae (Chlamydophila pneumoniae).